The following is a 197-amino-acid chain: MAERKAYVERNTLETQIKASINLDGTGKARFDIGVPFLEHMLDQIARHGLIDLDIECKGDLAIDDHHTVEDVGITVGQAFSQAIGDKKGIRRYGHAYVPLDEALSRVVIDFSGRPGLQMHVPYTRATVGGFDVDLFQEFFQGFVNHANVTLHIDNLRGTNTHHQIETVFKAFGRALRMAVELDERMAGQMPSTKGVL.

The protein belongs to the imidazoleglycerol-phosphate dehydratase family.

It is found in the cytoplasm. The enzyme catalyses D-erythro-1-(imidazol-4-yl)glycerol 3-phosphate = 3-(imidazol-4-yl)-2-oxopropyl phosphate + H2O. The protein operates within amino-acid biosynthesis; L-histidine biosynthesis; L-histidine from 5-phospho-alpha-D-ribose 1-diphosphate: step 6/9. The protein is Imidazoleglycerol-phosphate dehydratase of Pseudomonas syringae pv. syringae (strain B728a).